Here is a 613-residue protein sequence, read N- to C-terminus: Probable Xaa-Pro aminopeptidase P (613 aa).

Mn(2+)-binding residues include D408, D419, E517, and E531.

Belongs to the peptidase M24B family. Mn(2+) is required as a cofactor.

The enzyme catalyses Release of any N-terminal amino acid, including proline, that is linked to proline, even from a dipeptide or tripeptide.. Its function is as follows. Catalyzes the removal of a penultimate prolyl residue from the N-termini of peptides. The chain is Probable Xaa-Pro aminopeptidase P (ampp) from Penicillium rubens (strain ATCC 28089 / DSM 1075 / NRRL 1951 / Wisconsin 54-1255) (Penicillium chrysogenum).